The primary structure comprises 546 residues: Chaperonin GroEL (546 aa).

ATP is bound by residues 29–32 (TLGP), lysine 50, 86–90 (DGTTT), glycine 414, and aspartate 495. A disordered region spans residues 526–546 (AKEGAPAGGGMPDMGGMGGMM). The segment covering 531 to 546 (PAGGGMPDMGGMGGMM) has biased composition (gly residues).

The protein belongs to the chaperonin (HSP60) family. In terms of assembly, forms a cylinder of 14 subunits composed of two heptameric rings stacked back-to-back. Interacts with the co-chaperonin GroES.

The protein resides in the cytoplasm. The enzyme catalyses ATP + H2O + a folded polypeptide = ADP + phosphate + an unfolded polypeptide.. Functionally, together with its co-chaperonin GroES, plays an essential role in assisting protein folding. The GroEL-GroES system forms a nano-cage that allows encapsulation of the non-native substrate proteins and provides a physical environment optimized to promote and accelerate protein folding. In Jannaschia sp. (strain CCS1), this protein is Chaperonin GroEL.